The following is a 181-amino-acid chain: ADP-ribosylation factor 1 (181 aa).

Glycine 2 is lipidated: N-myristoyl glycine. GTP contacts are provided by residues 24–31 (GLDAAGKT), 67–71 (DVGGQ), and 126–129 (NKQD).

This sequence belongs to the small GTPase superfamily. Arf family.

The protein resides in the golgi apparatus. The enzyme catalyses GTP + H2O = GDP + phosphate + H(+). Functionally, GTP-binding protein involved in protein trafficking; may modulate vesicle budding and uncoating within the Golgi apparatus. The polypeptide is ADP-ribosylation factor 1 (ARF1) (Daucus carota (Wild carrot)).